The sequence spans 187 residues: Nuclear transcription factor Y subunit C-8 (187 aa).

Positions 163 to 187 (WPGAWTSVSGEEEEARGKKGGDDGN) are disordered. The span at 177–187 (ARGKKGGDDGN) shows a compositional bias: basic and acidic residues.

Belongs to the NFYC/HAP5 subunit family. In terms of assembly, heterotrimeric transcription factor composed of three components, NF-YA, NF-YB and NF-YC. NF-YB and NF-YC must interact and dimerize for NF-YA association and DNA binding. As to expression, expressed in flowers and siliques.

The protein resides in the nucleus. In terms of biological role, stimulates the transcription of various genes by recognizing and binding to a CCAAT motif in promoters. In Arabidopsis thaliana (Mouse-ear cress), this protein is Nuclear transcription factor Y subunit C-8 (NFYC8).